We begin with the raw amino-acid sequence, 407 residues long: Probable sodium/metabolite cotransporter BASS5, chloroplastic (407 aa).

The transit peptide at 1 to 57 (MGVISPTETLFLKSQHRLLQPRNYSYALAFHSTRRVANFPRNSFSSLGSCSVDFPLR) directs the protein to the chloroplast. The next 9 membrane-spanning stretches (helical) occupy residues 101–121 (FIPHGILLSTILALVYPPSFT), 122–142 (WFKPRYFVPGLGFMMFAVGIN), 162–184 (YIGQYLIKPLLGYIFGVIAVSLF), 191–213 (GAGIMLVSCVSGAQLSNYTTFLT), 222–242 (IVMTSISTATAVLVTPMLSLL), 252–272 (VFGMISSILQVVITPIAAGLL), 286–306 (PFLPALTVIDMSCCIGAPLAL), 317–337 (ATILFLVITFHLLAFVAGYFF), and 379–399 (LVGVPPAISTVVMSLMGVSLV).

Belongs to the bile acid:sodium symporter (BASS) (TC 2.A.28) family. Widely expressed.

The protein resides in the membrane. The protein localises to the plastid. It is found in the chloroplast envelope. Its function is as follows. Plastidic transporter involved in the biosynthesis of aliphatic glucosinolates by translocating the biosynthetic intermediates of Met-derived glucosinolates across chloroplast membranes. Transports short chain (C2) alpha-keto acids, such as 4-methylsulfanyl-2-oxobutanoic acid, from the cytosol to the chloroplast where they are subjected to chain elongation cycles. Also functions in the transport of chain-elongated (C3 to C8) Met derivatives from the chloroplast to the cytosol. Does not seem to be involved in the transport of indole-derived glucosinolates. The protein is Probable sodium/metabolite cotransporter BASS5, chloroplastic (BASS5) of Arabidopsis thaliana (Mouse-ear cress).